The following is a 370-amino-acid chain: Sphingosine 1-phosphate receptor 2 (370 aa).

The Extracellular portion of the chain corresponds to 1 to 57 (MTTCRLFAGFCQAVTMSKYSQYFNKTLIQVHYLTAKEMTAEELRDRIESKQSLSSLN). The N-linked (GlcNAc...) asparagine glycan is linked to asparagine 24. Residues 58-78 (ILFVVICSIIILENLLVLIAV) form a helical membrane-spanning segment. Residues 79-87 (FRNKKFHSA) lie on the Cytoplasmic side of the membrane. Residues 88–108 (MFFFIGNLAFSDLLAGSAYIA) form a helical membrane-spanning segment. At 109 to 128 (NIFLSGPRTFHLTPVQWFIR) the chain is on the extracellular side. Residues 129 to 149 (EGTAFIALSASVFSLLAIAIE) form a helical membrane-spanning segment. Residues 150–167 (RYIAITKVKVYGSNKTCR) are Cytoplasmic-facing. A helical transmembrane segment spans residues 168–193 (MFLLIGACWVMSILLGGLPIIGWNCI). Residues 194–219 (NNLDDCSAVLPLNTRYYIRFVVTIFS) lie on the Extracellular side of the membrane. Residues 220–230 (IILLSIVILYV) form a helical membrane-spanning segment. Residues 231–254 (RIYLIVRTSHQEATNSPAYALLKT) lie on the Cytoplasmic side of the membrane. The chain crosses the membrane as a helical span at residues 255–275 (VTIVLGVFIICWLPAFTILLL). At 276–289 (DTSCKMKQCPILNN) the chain is on the extracellular side. A helical membrane pass occupies residues 290 to 310 (AGIFFSFATLNSALNPLIYTL). Over 311 to 370 (RSKDMRKEFLRVLCCWGLLNCGRPPHRCMVPLKSSSSMEHCTNKHEHQSIPIMQDCTTCV) the chain is Cytoplasmic. A lipid anchor (S-palmitoyl cysteine) is attached at cysteine 325.

This sequence belongs to the G-protein coupled receptor 1 family.

The protein localises to the cell membrane. Its function is as follows. Receptor for the lysosphingolipid sphingosine 1-phosphate (S1P). S1P receptor is critical for cell migration and epithelial integrity during vertebrate embryogenesis. Receptor for the chemokine-like protein FAM19A5. Mediates the inhibitory effect of FAM19A5 on vascular smooth muscle cell proliferation and migration. The chain is Sphingosine 1-phosphate receptor 2 (s1pr2) from Danio rerio (Zebrafish).